Reading from the N-terminus, the 88-residue chain is EKC/KEOPS complex subunit SPAC4H3.13 (88 aa).

This sequence belongs to the CTAG/PCC1 family. In terms of assembly, component of the EKC/KEOPS complex composed of at least of SPAP27G11.07c/BUD32, cgi121, gon7, pgp2 and SPAC4H3.13/PCC1; the whole complex dimerizes.

The protein resides in the cytoplasm. It localises to the nucleus. Its subcellular location is the chromosome. It is found in the telomere. Component of the EKC/KEOPS complex that is required for the formation of a threonylcarbamoyl group on adenosine at position 37 (t(6)A37) in tRNAs that read codons beginning with adenine. The complex is probably involved in the transfer of the threonylcarbamoyl moiety of threonylcarbamoyl-AMP (TC-AMP) to the N6 group of A37. SPAC4H3.13/PCC1 functions as a dimerization module for the complex. The EKC/KEOPS complex also promotes both telomere uncapping and telomere elongation. The complex is required for efficient recruitment of transcriptional coactivators. The sequence is that of EKC/KEOPS complex subunit SPAC4H3.13 from Schizosaccharomyces pombe (strain 972 / ATCC 24843) (Fission yeast).